The sequence spans 197 residues: Imidazoleglycerol-phosphate dehydratase (197 aa).

It belongs to the imidazoleglycerol-phosphate dehydratase family.

It is found in the cytoplasm. The catalysed reaction is D-erythro-1-(imidazol-4-yl)glycerol 3-phosphate = 3-(imidazol-4-yl)-2-oxopropyl phosphate + H2O. It participates in amino-acid biosynthesis; L-histidine biosynthesis; L-histidine from 5-phospho-alpha-D-ribose 1-diphosphate: step 6/9. The sequence is that of Imidazoleglycerol-phosphate dehydratase from Gloeobacter violaceus (strain ATCC 29082 / PCC 7421).